A 291-amino-acid chain; its full sequence is 4-diphosphocytidyl-2-C-methyl-D-erythritol kinase (291 aa).

Residue Lys-11 is part of the active site. Residue 97-107 (PVAAGIGGGSS) participates in ATP binding. The active site involves Asp-139.

It belongs to the GHMP kinase family. IspE subfamily.

It catalyses the reaction 4-CDP-2-C-methyl-D-erythritol + ATP = 4-CDP-2-C-methyl-D-erythritol 2-phosphate + ADP + H(+). Its pathway is isoprenoid biosynthesis; isopentenyl diphosphate biosynthesis via DXP pathway; isopentenyl diphosphate from 1-deoxy-D-xylulose 5-phosphate: step 3/6. In terms of biological role, catalyzes the phosphorylation of the position 2 hydroxy group of 4-diphosphocytidyl-2C-methyl-D-erythritol. This chain is 4-diphosphocytidyl-2-C-methyl-D-erythritol kinase, found in Methylorubrum extorquens (strain PA1) (Methylobacterium extorquens).